Here is a 913-residue protein sequence, read N- to C-terminus: Auxilin (913 aa).

The residue at position 1 (M1) is an N-acetylmethionine. A run of 3 repeats spans residues 36–39 (NLKD), 40–43 (NLKD), and 44–47 (TLKD). Positions 36–47 (NLKDNLKDTLKD) are 3 X 4 AA approximate tandem repeats. In terms of domain architecture, Phosphatase tensin-type spans 55-222 (SVTSYTKGDL…GYMCDLLADK (168 aa)). The residue at position 112 (S112) is a Phosphoserine. The active-site Phosphocysteine intermediate is the C164. One can recognise a C2 tensin-type domain in the interval 228–366 (FKPLTIKSIT…FQVTLDVELQ (139 aa)). An SH3-binding motif is present at residues 409-417 (PIDIPPDNP). Residues 451–776 (QESEQSDDEL…GKGSSNLEGK (326 aa)) are disordered. Phosphoserine occurs at positions 453 and 456. The span at 506–523 (AMSNSFSPPAAPPTNSEL) shows a compositional bias: polar residues. Positions 554–572 (ASTQSTPRRSATSTSASPT) are enriched in low complexity. A phosphoserine mark is found at S563 and S570. The span at 599 to 629 (FLNTSSASSDPFLQPTRSPSPTVHASSTPAV) shows a compositional bias: polar residues. Residues 654 to 669 (SAATSPTGSSHGTPTH) show a composition bias toward low complexity. Residues 849-913 (TKWKPVGMAD…FENQGQKPLY (65 aa)) enclose the J domain.

In terms of assembly, forms a complex composed of HSPA8, CLTC and DNAJC6. Interacts with HSPA8/HSC70 in an ATP-dependent manner; this interaction stimulates the HSPA8's ATPase activity. Interacts with CLTC; this interaction produces a local change in heavy-chain contacts, creating a detectable global distortion of the clathrin coat. Interacts with AP2A2. Interacts with DNM1(GTP-bound form); this interaction allows clathrin-coated vesicle (CCV) formation at the plasma membrane. Post-translationally, phosphorylation at Ser-570 modulates its ability to bind CLTC and therefore the synaptic vesicle endocytosis (SVE). In terms of processing, the N-terminus is blocked. As to expression, expressed in various brain regions, including cerebellum, corpus callosum, cortex, striatum, brainstem, pons, putamen, spinal cord and substantia nigra. Very low expression in non-neural tissues such as leukocytes, liver, adipose tissue, skeletal muscle and bone marrow.

The protein localises to the cytoplasmic vesicle. It is found in the clathrin-coated vesicle. Functionally, may act as a protein phosphatase and/or a lipid phosphatase. Co-chaperone that recruits HSPA8/HSC70 to clathrin-coated vesicles (CCVs) and promotes the ATP-dependent dissociation of clathrin from CCVs and participates in clathrin-mediated endocytosis of synaptic vesicles and their recycling and also in intracellular trafficking. Firstly, binds tightly to the clathrin cages, at a ratio of one DNAJC6 per clathrin triskelion. The HSPA8:ATP complex then binds to the clathrin-auxilin cage, initially at a ratio of one HSPA8 per triskelion leading to ATP hydrolysis stimulation and causing a conformational change in the HSPA8. This cycle is repeated three times to drive to a complex containing the clathrin-auxilin cage associated to three HSPA8:ADP complex. The ATP hydrolysis of the third HSPA8:ATP complex leads to a concerted dismantling of the cage into component triskelia. Then, dissociates from the released triskelia and be recycled to initiate another cycle of HSPA8's recruitment. Also acts during the early steps of clathrin-coated vesicle (CCV) formation through its interaction with the GTP bound form of DNM1. This Homo sapiens (Human) protein is Auxilin.